We begin with the raw amino-acid sequence, 471 residues long: DENN domain-containing protein 2D (471 aa).

The 150-residue stretch at 55 to 204 (EYLLVVSLKK…AFPAPGKTVT (150 aa)) folds into the uDENN domain. In terms of domain architecture, cDENN spans 226–359 (HLEHVDFSSL…LQDDILDSLG (134 aa)). The 85-residue stretch at 361-445 (GINELKTAEQ…QEAEKSKNPP (85 aa)) folds into the dDENN domain.

As to expression, in bronchial mucosa, mainly expressed in ciliated and basal epithelial cells and weakly in alveolar cells (at protein level). Tends to be down-regulated in lung cancers, immortalized bronchial epithelial cell lines and precancerous lesions.

It is found in the cytoplasm. Its function is as follows. Guanine nucleotide exchange factor (GEF) which may activate RAB9A and RAB9B. Promotes the exchange of GDP to GTP, converting inactive GDP-bound Rab proteins into their active GTP-bound form. The protein is DENN domain-containing protein 2D (DENND2D) of Homo sapiens (Human).